The sequence spans 254 residues: MGLLRIPLYRLYERRLERALSNAPKPRHVGVILDGNRRWARLSGLSSPKEGHRAGAEKIFELLDWCDEVGVQVVTLWLLSTDNLARPPEELEPLFEIIENTVRRLCNEGRRVNPMGALDLLPASTAQVMKEAGTTTERNPGLLVNVAVGYGGRREIADAVRSLLLEEAAKGTTLEELAERLDLDDIAKHLYTRGQPDPDLLIRTSGEQRLSGFLLWQSAHSEFYFCEVFWPAFRKIDFLRALRSYSVRQRRFGC.

The active site involves aspartate 34. Aspartate 34 is a binding site for Mg(2+). Residues 35-38 (GNRR), tryptophan 39, histidine 52, and 80-82 (STD) contribute to the substrate site. The Proton acceptor role is filled by asparagine 83. Residues arginine 86, arginine 203, and 209–211 (RLS) contribute to the substrate site. A Mg(2+)-binding site is contributed by glutamate 222.

This sequence belongs to the UPP synthase family. Z-FPP synthase subfamily. Homodimer. The cofactor is Mg(2+).

It catalyses the reaction isopentenyl diphosphate + (2E)-geranyl diphosphate = (2Z,6E)-farnesyl diphosphate + diphosphate. Functionally, catalyzes the condensation of only one isopentenyl pyrophosphate (IPP) unit in the cis configuration to E-geranyl diphosphate (E-GPP) generating the 15 carbon product (2Z,6E)-farnesyl diphosphate (Z-FPP or EZ-FPP). Only geranyl diphosphate (GPP) can be used as isoprenyl acceptor. The sequence is that of (2Z,6E)-farnesyl diphosphate synthase from Thermobifida fusca (strain YX).